Reading from the N-terminus, the 489-residue chain is Probable transporter MCH1 (489 aa).

12 helical membrane passes run 34-54 (ISLI…FTPV), 68-88 (IIGS…GYLA), 94-114 (VLLS…AATV), 124-144 (LAIS…TALL), 156-175 (LTIS…GSRV), 196-216 (FSFL…VVSI), 262-282 (ISTY…EMYI), 302-324 (VAIH…DFLV), 335-355 (LLSI…STFV), 359-379 (YYII…LYPT), 403-423 (IGST…CGVF), and 463-483 (SLII…ILRI).

The protein belongs to the major facilitator superfamily.

It localises to the vacuole membrane. Its function is as follows. Probable transporter. In Wickerhamomyces anomalus (Yeast), this protein is Probable transporter MCH1 (MCH1).